The primary structure comprises 402 residues: Triose phosphate/phosphate translocator, non-green plastid, chloroplastic (402 aa).

A chloroplast-targeting transit peptide spans 1–82 (MQSSAVFSAS…SLDTNRFKTA (82 aa)). Residues 83 to 98 (ATAVPEEGEGSGKMTK) lie on the Chloroplast intermembrane side of the membrane. Residues 99–119 (VLELGLLFAMWYLFNIYFNIY) form a helical membrane-spanning segment. One can recognise an EamA domain in the interval 118–236 (IYNKQVLKAL…IVGGVALASV (119 aa)). Residues 120-131 (NKQVLKALHAPM) lie on the Lumenal side of the membrane. A helical membrane pass occupies residues 132–152 (TVTLVQFAVGSVLITFMWALN). At 153–209 (LYKRPKISAAQLAAILPLAVVHTLGNLFTNMSLGKVSVSFTHTIKAMEPFFSVVLSA) the chain is on the chloroplast intermembrane side. Residues 210 to 230 (MFLGEVPTPWVIGSIIPIVGG) form a helical membrane-spanning segment. Topologically, residues 231-278 (VALASVTEVSFNWAGFLSAMASNLTNQSRNVLSKKVMVKKDDSLDNIT) are lumenal. The helical transmembrane segment at 279–298 (LFSIITLMSLFLMAPVTFFS) threads the bilayer. The Chloroplast intermembrane portion of the chain corresponds to 299–374 (EGIKFTPSYI…IFFKTPVSPV (76 aa)). A helical membrane pass occupies residues 375–394 (NAFGTGIALAGVFLYSRVKR). Residues 395–402 (IKPKPKTA) are Lumenal-facing.

Belongs to the TPT transporter family. TPT (TC 2.A.7.9) subfamily. Homodimer.

Its subcellular location is the plastid. The protein resides in the chloroplast membrane. In terms of biological role, mediates the export of fixed carbons from the chloroplasts into the cytosol in the form of triose phosphates. This chain is Triose phosphate/phosphate translocator, non-green plastid, chloroplastic (NGTPT), found in Brassica oleracea var. botrytis (Cauliflower).